We begin with the raw amino-acid sequence, 127 residues long: Large ribosomal subunit protein bL19 (127 aa).

Belongs to the bacterial ribosomal protein bL19 family.

This protein is located at the 30S-50S ribosomal subunit interface and may play a role in the structure and function of the aminoacyl-tRNA binding site. The polypeptide is Large ribosomal subunit protein bL19 (Jannaschia sp. (strain CCS1)).